Consider the following 115-residue polypeptide: Transcription initiation factor IIA subunit 2 (115 aa).

The protein belongs to the TFIIA subunit 2 family. As to quaternary structure, TFIIA is a heterodimer of the large unprocessed subunit 1 and a small subunit gamma.

It is found in the nucleus. TFIIA is a component of the transcription machinery of RNA polymerase II and plays an important role in transcriptional activation. TFIIA in a complex with tbp mediates transcriptional activity. The protein is Transcription initiation factor IIA subunit 2 (gtf2a2) of Dictyostelium discoideum (Social amoeba).